A 155-amino-acid polypeptide reads, in one-letter code: Ribonuclease H (155 aa).

In terms of domain architecture, RNase H type-1 spans 4–145 (QQKVVEIYTD…ADALARKAIT (142 aa)). Residues Asp13, Glu51, Asp73, and Asp137 each coordinate Mg(2+).

This sequence belongs to the RNase H family. As to quaternary structure, monomer. Requires Mg(2+) as cofactor.

It localises to the cytoplasm. The enzyme catalyses Endonucleolytic cleavage to 5'-phosphomonoester.. Endonuclease that specifically degrades the RNA of RNA-DNA hybrids. This Bartonella quintana (strain Toulouse) (Rochalimaea quintana) protein is Ribonuclease H.